A 234-amino-acid chain; its full sequence is Probable cyclic nucleotide phosphodiesterase Rmag_0669 (234 aa).

Residues aspartate 11, histidine 13, aspartate 49, asparagine 79, histidine 145, histidine 184, and histidine 186 each coordinate Fe cation. Residues histidine 13, aspartate 49, and 79-80 (NH) each bind AMP. AMP is bound at residue histidine 186.

Belongs to the cyclic nucleotide phosphodiesterase class-III family. It depends on Fe(2+) as a cofactor.

The chain is Probable cyclic nucleotide phosphodiesterase Rmag_0669 from Ruthia magnifica subsp. Calyptogena magnifica.